The sequence spans 42 residues: Photosystem I reaction center subunit IX (42 aa).

The chain crosses the membrane as a helical span at residues 7 to 27 (YLSTAPVLSALWFAILAGLLI).

Belongs to the PsaJ family.

It localises to the plastid. The protein resides in the chloroplast thylakoid membrane. Its function is as follows. May help in the organization of the PsaE and PsaF subunits. This chain is Photosystem I reaction center subunit IX, found in Chlorokybus atmophyticus (Soil alga).